A 164-amino-acid chain; its full sequence is Replication restart protein DnaT (164 aa).

The protein belongs to the DnaT family. In terms of assembly, homooligomerizes. Interacts with PriB. Component of the replication restart primosome. Primosome assembly occurs via a 'hand-off' mechanism. PriA binds to replication forks, subsequently PriB then DnaT bind; DnaT then displaces ssDNA to generate the helicase loading substrate.

Functionally, involved in the restart of stalled replication forks, which reloads the replicative helicase on sites other than the origin of replication. Can function in multiple replication restart pathways. Displaces ssDNA from a PriB-ssDNA complex. Probably forms a spiral filament on ssDNA. The protein is Replication restart protein DnaT of Buchnera aphidicola subsp. Acyrthosiphon pisum (strain 5A).